The following is a 387-amino-acid chain: Leucine aminopeptidase 1 (387 aa).

Residues 1-18 form the signal peptide; sequence MKFTNLSLLALSASLASA. Residues 19–86 constitute a propeptide that is removed on maturation; the sequence is RFVEQHETDQ…LGTLRTSSVK (68 aa). Asn179 carries an N-linked (GlcNAc...) asparagine glycan. The Zn(2+) site is built by His187, Asp206, Glu245, and Asp272. An intrachain disulfide couples Cys321 to Cys325. His354 contributes to the Zn(2+) binding site.

It belongs to the peptidase M28 family. M28E subfamily. Monomer. Zn(2+) serves as cofactor.

It localises to the secreted. Functionally, extracellular aminopeptidase that allows assimilation of proteinaceous substrates. This Sclerotinia sclerotiorum (strain ATCC 18683 / 1980 / Ss-1) (White mold) protein is Leucine aminopeptidase 1 (lap1).